We begin with the raw amino-acid sequence, 479 residues long: Galactosylgalactosylxylosylprotein 3-beta-glucuronosyltransferase P (479 aa).

Over 1 to 34 (MKGGNYTSLGTCSGINVSGNVAGTRKMSLGKSIK) the chain is Cytoplasmic. The chain crosses the membrane as a helical; Signal-anchor for type II membrane protein span at residues 35 to 50 (MYLTIFILTTCIYMAL). The Lumenal segment spans residues 51–479 (YQYHISREPF…EHIDRLLVRP (429 aa)). N-linked (GlcNAc...) asparagine glycosylation is found at Asn-90, Asn-97, Asn-98, and Asn-271. Residues 94–120 (NTNNNSTTTSTTTTTAPTTPTTTTTTT) are compositionally biased toward low complexity. The segment at 94–122 (NTNNNSTTTSTTTTTAPTTPTTTTTTTVG) is disordered. Asp-335 contributes to the Mn(2+) binding site. Catalysis depends on Glu-418, which acts as the Proton acceptor. Asn-460 is a glycosylation site (N-linked (GlcNAc...) asparagine).

It belongs to the glycosyltransferase 43 family. Mn(2+) is required as a cofactor.

The protein localises to the golgi apparatus membrane. The enzyme catalyses 3-O-(beta-D-galactosyl-(1-&gt;3)-beta-D-galactosyl-(1-&gt;4)-beta-D-xylosyl)-L-seryl-[protein] + UDP-alpha-D-glucuronate = 3-O-(beta-D-GlcA-(1-&gt;3)-beta-D-Gal-(1-&gt;3)-beta-D-Gal-(1-&gt;4)-beta-D-Xyl)-L-seryl-[protein] + UDP + H(+). The protein operates within protein modification; protein glycosylation. Involved in the biosynthesis of L2/HNK-1 carbohydrate epitope on both glycolipids and glycoproteins. Enzyme has a broad specificity. This chain is Galactosylgalactosylxylosylprotein 3-beta-glucuronosyltransferase P (GlcAT-P), found in Drosophila melanogaster (Fruit fly).